Here is a 433-residue protein sequence, read N- to C-terminus: Inward rectifier potassium channel 18 (433 aa).

The Cytoplasmic segment spans residues 1 to 77 (MTAASRANPY…LADMFTTCVD (77 aa)). Residues 78 to 104 (IRWRYMLLIFSLAFLASWLLFGVIFWV) form a helical membrane-spanning segment. Topologically, residues 105–129 (IAVAHGDLEPAEGHGRTPCVMQVHG) are extracellular. Positions 130-146 (FMAAFLFSIETQTTIGY) form an intramembrane region, helical; Pore-forming. A Selectivity filter motif is present at residues 143–148 (TIGYGL). At 147–155 (GLRCVTEEC) the chain is on the extracellular side. The helical transmembrane segment at 156 to 183 (LVAVFMVVAQSIVGCIIDSFMIGAIMAK) threads the bilayer. The Cytoplasmic portion of the chain corresponds to 184 to 433 (MARPKKRAQT…QRPYRRGSEI (250 aa)). Positions 387-433 (DEEDEADGDQDGRSRDGLSPQARHDFDRLQAGGGVLEQRPYRRGSEI) are disordered. Residues 396–414 (QDGRSRDGLSPQARHDFDR) are compositionally biased toward basic and acidic residues.

The protein belongs to the inward rectifier-type potassium channel (TC 1.A.2.1) family. KCNJ12 subfamily. As to quaternary structure, can form heteromeric channels with Kir2.1/KCNJ2. Can form heteromeric channels with Kir2.2/KCNJ12. In terms of processing, probably phosphorylated by PKC; decreases single-channel open probability. Specifically expressed in skeletal muscle.

The protein resides in the cell membrane. Its subcellular location is the endoplasmic reticulum. It catalyses the reaction K(+)(in) = K(+)(out). Its function is as follows. Inward rectifier potassium channels are characterized by a greater tendency to allow potassium to flow into the cell rather than out of it. Their voltage dependence is regulated by the concentration of extracellular potassium; as external potassium is raised, the voltage range of the channel opening shifts to more positive voltages. The inward rectification is mainly due to the blockage of outward current by internal magnesium. This Homo sapiens (Human) protein is Inward rectifier potassium channel 18 (KCNJ18).